Reading from the N-terminus, the 673-residue chain is Synaptotagmin-like protein 4 (673 aa).

Positions 4 to 122 (ILDLSFLSEM…KATGDWFYDQ (119 aa)) constitute a RabBD domain. An FYVE-type zinc finger spans residues 63–105 (CARCQEGLGRLIPKSSTCVGCNHLVCRECRVLESNGSWRCKVC). A disordered region spans residues 184 to 253 (FEVPKTRSGK…PGNQNAVCGD (70 aa)). Phosphoserine is present on residues Ser-202, Ser-205, Ser-218, Ser-222, and Ser-275. The region spanning 358–480 (VTGKIAFSLK…KLDKKLDHCL (123 aa)) is the C2 1 domain. Ser-490 is modified (phosphoserine). Residues 509–635 (PASKLPVGGD…ISNGEVVDWM (127 aa)) form the C2 2 domain.

In terms of assembly, part of a ternary complex containing STX1A and RAB27A. Can bind both dominant negative and dominant active mutants of RAB27A. Binds STXBP1, RAB3A, RAB8A and RAB27B. Interacts with MYO5A. As to expression, detected in the pancreatic islet, in particular in insulin-positive beta cells, and in pituitary.

It is found in the membrane. Its subcellular location is the cytoplasmic vesicle. The protein localises to the secretory vesicle membrane. Functionally, modulates exocytosis of dense-core granules and secretion of hormones in the pancreas and the pituitary. Interacts with vesicles containing negatively charged phospholipids in a Ca(2+)-independent manner. The chain is Synaptotagmin-like protein 4 (Sytl4) from Mus musculus (Mouse).